A 198-amino-acid chain; its full sequence is RxLR effector protein Htp1 (198 aa).

A signal peptide spans Met-1–Ala-23. The RxLR signature appears at Arg-46–Arg-49. Disordered stretches follow at residues Leu-48–Lys-101 and Thr-115–Asp-198. Asn-70 carries N-linked (GlcNAc...) asparagine glycosylation. The span at Asn-70–Glu-91 shows a compositional bias: polar residues. A compositionally biased stretch (acidic residues) spans Asp-126–Val-137. The span at Ala-173–Ala-191 shows a compositional bias: low complexity.

It belongs to the RxLR effector family. As to quaternary structure, interacts with the effector Htp3 within the host cells.

The protein resides in the secreted. Its subcellular location is the host cell. In terms of biological role, effector involved in the disease saprolegniosis in salmonids and other freshwater fish, resulting in considerable economic losses in aquaculture. Within the host fish cells, Htp1 is involved in the uptake of the S.parasitica effector Htp3 at a neutral pH (pH 7.5) and its release from vesicles into host cytosol where it degrades nucleic acids. This Saprolegnia parasitica (strain CBS 223.65) protein is RxLR effector protein Htp1.